Here is a 531-residue protein sequence, read N- to C-terminus: Coiled-coil domain-containing protein 9 (531 aa).

Residues 40–531 form a disordered region; it reads EDRKKAELEG…PGEAWPFESV (492 aa). A compositionally biased stretch (basic and acidic residues) spans 59 to 72; sequence RSVEKENVAVESEK. Ser80 is subject to Phosphoserine. Thr95 carries the post-translational modification Phosphothreonine. Arg107 is modified (omega-N-methylarginine). Ser111 is subject to Phosphoserine. An omega-N-methylarginine mark is found at Arg121, Arg128, and Arg130. Asymmetric dimethylarginine is present on residues Arg131, Arg133, and Arg135. Residue Ser137 is modified to Phosphoserine. Basic and acidic residues-rich tracts occupy residues 148 to 185, 194 to 217, and 227 to 241; these read ISDRKSKEWEERRRQNIEKMNEEMEKIAEYERNQREGV, FLDDPRRRSGPLEESERDRREESR, and DFERVRCGLEHERQG. Positions 149–185 form a coiled coil; sequence SDRKSKEWEERRRQNIEKMNEEMEKIAEYERNQREGV. Ser202 is modified (phosphoserine). Ser248 and Ser255 each carry phosphoserine. Composition is skewed to basic and acidic residues over residues 258-279, 289-302, 311-320, and 361-372; these read GRERSEYLRWKQEREKIDQERL, WRREWDAEKTDGMF, EPSHRYDDQA, and YSDHDDRWETKE. Phosphoserine occurs at positions 376, 386, and 390. Low complexity predominate over residues 386–395; sequence SPETSPKETP. Residues 396-406 are compositionally biased toward pro residues; it reads MQPPEIPAPAH. Positions 411-446 are enriched in acidic residues; it reads DEGEENEGEEDEEWEDISEDEEEEEIEVEEGDEEEP. Ser521 bears the Phosphoserine mark.

In terms of assembly, probable component of the exon junction complex (EJC); the association is RNA-dependent.

Functionally, probable component of the exon junction complex (EJC), a multiprotein complex that associates immediately upstream of the exon-exon junction on mRNAs and serves as a positional landmark for the intron exon structure of genes and directs post-transcriptional processes in the cytoplasm such as mRNA export, nonsense-mediated mRNA decay (NMD) or translation. This is Coiled-coil domain-containing protein 9 from Homo sapiens (Human).